The chain runs to 68 residues: Small cysteine-rich protein 2 (68 aa).

The signal sequence occupies residues 1–24; sequence MAVKFHLCLLLIILVGMGAHVAFA.

Belongs to the Cnidaria small cysteine-rich protein (SCRiP) family. gamma subfamily. In terms of processing, contains 4 disulfide bonds.

Its subcellular location is the secreted. The protein localises to the nematocyst. Its function is as follows. Induces neurotoxic symptoms on zebrafish. Has also been claimed to be implied in calcification, but tests on homolog proteins suggest that proteins of this family have a neurotoxic function and not a calcification function. The sequence is that of Small cysteine-rich protein 2 from Orbicella faveolata (Mountainous star coral).